We begin with the raw amino-acid sequence, 1318 residues long: DNA-directed RNA polymerase subunit beta' (1318 aa).

Positions 221, 295, 302, and 305 each coordinate Zn(2+).

The protein belongs to the RNA polymerase beta' chain family. RpoC2 subfamily. As to quaternary structure, in cyanobacteria the RNAP catalytic core is composed of 2 alpha, 1 beta, 1 beta', 1 gamma and 1 omega subunit. When a sigma factor is associated with the core the holoenzyme is formed, which can initiate transcription. Requires Zn(2+) as cofactor.

It catalyses the reaction RNA(n) + a ribonucleoside 5'-triphosphate = RNA(n+1) + diphosphate. Its function is as follows. DNA-dependent RNA polymerase catalyzes the transcription of DNA into RNA using the four ribonucleoside triphosphates as substrates. The chain is DNA-directed RNA polymerase subunit beta' from Synechococcus sp. (strain ATCC 27144 / PCC 6301 / SAUG 1402/1) (Anacystis nidulans).